Consider the following 733-residue polypeptide: Photosystem I P700 chlorophyll a apoprotein A2 (733 aa).

8 consecutive transmembrane segments (helical) span residues Ile46–Ala69, Leu134–Gln157, Leu174–Ile198, Ile272–Tyr290, Leu329–Tyr352, Ala368–Val394, Ala416–His438, and Phe516–Val534. [4Fe-4S] cluster is bound by residues Cys558 and Cys567. A run of 2 helical transmembrane segments spans residues Ala574–Trp595 and Leu642–Ile664. 3 residues coordinate chlorophyll a: His653, Met661, and Tyr669. Residue Trp670 participates in phylloquinone binding. Residues Leu706 to Ala726 traverse the membrane as a helical segment.

The protein belongs to the PsaA/PsaB family. As to quaternary structure, the PsaA/B heterodimer binds the P700 chlorophyll special pair and subsequent electron acceptors. PSI consists of a core antenna complex that captures photons, and an electron transfer chain that converts photonic excitation into a charge separation. The eukaryotic PSI reaction center is composed of at least 11 subunits. P700 is a chlorophyll a/chlorophyll a' dimer, A0 is one or more chlorophyll a, A1 is one or both phylloquinones and FX is a shared 4Fe-4S iron-sulfur center. is required as a cofactor.

Its subcellular location is the plastid. It is found in the chloroplast thylakoid membrane. It carries out the reaction reduced [plastocyanin] + hnu + oxidized [2Fe-2S]-[ferredoxin] = oxidized [plastocyanin] + reduced [2Fe-2S]-[ferredoxin]. Functionally, psaA and PsaB bind P700, the primary electron donor of photosystem I (PSI), as well as the electron acceptors A0, A1 and FX. PSI is a plastocyanin/cytochrome c6-ferredoxin oxidoreductase, converting photonic excitation into a charge separation, which transfers an electron from the donor P700 chlorophyll pair to the spectroscopically characterized acceptors A0, A1, FX, FA and FB in turn. Oxidized P700 is reduced on the lumenal side of the thylakoid membrane by plastocyanin or cytochrome c6. The chain is Photosystem I P700 chlorophyll a apoprotein A2 from Phaeodactylum tricornutum (strain CCAP 1055/1).